The sequence spans 430 residues: Trigger factor (430 aa).

Residues 163-248 form the PPIase FKBP-type domain; the sequence is GNIAIIDFKG…IKDIKVKELP (86 aa).

This sequence belongs to the FKBP-type PPIase family. Tig subfamily.

It localises to the cytoplasm. It carries out the reaction [protein]-peptidylproline (omega=180) = [protein]-peptidylproline (omega=0). In terms of biological role, involved in protein export. Acts as a chaperone by maintaining the newly synthesized protein in an open conformation. Functions as a peptidyl-prolyl cis-trans isomerase. The sequence is that of Trigger factor from Clostridium botulinum (strain Loch Maree / Type A3).